The following is a 149-amino-acid chain: Nucleoside diphosphate kinase (149 aa).

ATP-binding residues include K9, F57, R85, T91, R102, and N112. Residue H115 is the Pros-phosphohistidine intermediate of the active site.

The protein belongs to the NDK family. Requires Mg(2+) as cofactor.

It localises to the cytoplasm. The enzyme catalyses a 2'-deoxyribonucleoside 5'-diphosphate + ATP = a 2'-deoxyribonucleoside 5'-triphosphate + ADP. It catalyses the reaction a ribonucleoside 5'-diphosphate + ATP = a ribonucleoside 5'-triphosphate + ADP. In terms of biological role, major role in the synthesis of nucleoside triphosphates other than ATP. The ATP gamma phosphate is transferred to the NDP beta phosphate via a ping-pong mechanism, using a phosphorylated active-site intermediate. In Methanococcoides burtonii (strain DSM 6242 / NBRC 107633 / OCM 468 / ACE-M), this protein is Nucleoside diphosphate kinase.